Here is a 209-residue protein sequence, read N- to C-terminus: FAS-associated death domain protein (209 aa).

The 79-residue stretch at 3 to 81 folds into the DED domain; that stretch reads PFLVLLHSVS…RKDLLLRLDD (79 aa). Residues 97-181 enclose the Death domain; the sequence is LRAAMEIICD…VVADLIEEDQ (85 aa). Positions 187-200 are enriched in polar residues; it reads QSGSANPGSFTAWD. A disordered region spans residues 187–209; sequence QSGSANPGSFTAWDSGSAAPGAS.

Can self-associate. Component of the AIM2 PANoptosome complex, a multiprotein complex that drives inflammatory cell death (PANoptosis). Component of the death-induced signaling complex (DISC) composed of cell surface receptor FAS/CD95 or TNFRSF1A, adapter protein FADD and the CASP8 protease; recruitment of CASP8 to the complex is required for processing of CASP8 into the p18 and p10 subunits. Interacts (via death domain) with FAS (via death domain). Interacts directly (via DED domain) with NOL3 (via CARD domain); inhibits death-inducing signaling complex (DISC) assembly by inhibiting the increase in FAS-FADD binding induced by FAS activation. Interacts with CFLAR, PEA15 and MBD4. When phosphorylated, part of a complex containing HIPK3 and FAS. May interact with MAVS/IPS1. Interacts with MOCV v-CFLAR protein and PIDD1. Interacts with RIPK1 and TRADD. Interacts with stimulated TNFRSF10B. Interacts with DDX24. In terms of processing, phosphorylated.

The protein resides in the cytoplasm. In terms of biological role, apoptotic adapter molecule that recruits caspases CASP8 or CASP10 to the activated FAS/CD95 or TNFRSF1A/TNFR-1 receptors. The resulting aggregate called the death-inducing signaling complex (DISC) performs CASP8 proteolytic activation. Active CASP8 initiates the subsequent cascade of caspases mediating apoptosis. Involved in interferon-mediated antiviral immune response, playing a role in the positive regulation of interferon signaling. The polypeptide is FAS-associated death domain protein (Bos taurus (Bovine)).